The following is a 275-amino-acid chain: Centromere protein V (275 aa).

Composition is skewed to low complexity over residues 1-10 (MRRSRSSAAA) and 17-51 (RSGASGASAAPAASAAAALAPSATRTRRSASQAGS). The tract at residues 1–109 (MRRSRSSAAA…ATPTSSASNL (109 aa)) is disordered. S18 and S21 each carry phosphoserine. Residue R43 is modified to Omega-N-methylarginine. Over residues 79 to 100 (GEPPPPELALLPPPPPPPPTPA) the composition is skewed to pro residues. Phosphothreonine occurs at positions 98, 101, and 103. Residues 148–260 (HTGGCHCGAV…TEEFNGSDWE (113 aa)) enclose the CENP-V/GFA domain. Zn(2+) contacts are provided by C152, C154, C172, C174, C177, C216, and C219. S257 is modified (phosphoserine).

It belongs to the Gfa family. Requires Zn(2+) as cofactor.

The protein resides in the chromosome. The protein localises to the centromere. It localises to the kinetochore. Its subcellular location is the nucleus. It is found in the cytoplasm. The protein resides in the cytoskeleton. The protein localises to the spindle. Functionally, required for distribution of pericentromeric heterochromatin in interphase nuclei and for centromere formation and organization, chromosome alignment and cytokinesis. The protein is Centromere protein V (CENPV) of Homo sapiens (Human).